Consider the following 1132-residue polypeptide: Sentrin-specific protease 6 (1132 aa).

Disordered stretches follow at residues S23 to N51 and L327 to T388. Phosphoserine is present on residues S41, S355, S356, S371, and S373. Residue T436 is modified to Phosphothreonine. A Glycyl lysine isopeptide (Lys-Gly) (interchain with G-Cter in SUMO2) cross-link involves residue K648. The protease stretch occupies residues I686–E1132. Residues H785 and D936 contribute to the active site. A Phosphoserine modification is found at S938. Residue C1049 is part of the active site. S1131 is modified (phosphoserine).

Belongs to the peptidase C48 family. In terms of assembly, interacts with RXRA. Forms a complex with KAT5-TIP60 and UBE2I in response to UV irradiation. Interacts with RPA1 to maintain it in hyposumoylated state during S phase preventing DNA repair initiation.

The protein resides in the nucleus. Its pathway is protein modification; protein sumoylation. In terms of biological role, protease that deconjugates SUMO1, SUMO2 and SUMO3 from targeted proteins. Processes preferentially poly-SUMO2 and poly-SUMO3 chains, but does not efficiently process SUMO1, SUMO2 and SUMO3 precursors. Deconjugates SUMO1 from RXRA, leading to transcriptional activation. Involved in chromosome alignment and spindle assembly, by regulating the kinetochore CENPH-CENPI-CENPK complex. Desumoylates PML and CENPI, protecting them from degradation by the ubiquitin ligase RNF4, which targets polysumoylated proteins for proteasomal degradation. Also desumoylates RPA1, thus preventing recruitment of RAD51 to the DNA damage foci to initiate DNA repair through homologous recombination. This is Sentrin-specific protease 6 (Senp6) from Mus musculus (Mouse).